The primary structure comprises 116 residues: uncharacterized protein (116 aa).

Helical transmembrane passes span 55–77 and 87–109; these read LSYSYHVIVYLCVLCKVYILYSF and FSYGSSLLYSLCSNLYIYIYAAL.

It localises to the membrane. This is an uncharacterized protein from Saccharomyces cerevisiae (strain ATCC 204508 / S288c) (Baker's yeast).